A 253-amino-acid polypeptide reads, in one-letter code: 2-C-methyl-D-erythritol 4-phosphate cytidylyltransferase (253 aa).

It belongs to the IspD/TarI cytidylyltransferase family. IspD subfamily.

It catalyses the reaction 2-C-methyl-D-erythritol 4-phosphate + CTP + H(+) = 4-CDP-2-C-methyl-D-erythritol + diphosphate. The protein operates within isoprenoid biosynthesis; isopentenyl diphosphate biosynthesis via DXP pathway; isopentenyl diphosphate from 1-deoxy-D-xylulose 5-phosphate: step 2/6. Catalyzes the formation of 4-diphosphocytidyl-2-C-methyl-D-erythritol from CTP and 2-C-methyl-D-erythritol 4-phosphate (MEP). This chain is 2-C-methyl-D-erythritol 4-phosphate cytidylyltransferase, found in Chlorobium chlorochromatii (strain CaD3).